Reading from the N-terminus, the 117-residue chain is Holo-[acyl-carrier-protein] synthase (117 aa).

The Mg(2+) site is built by Asp-8 and Glu-55.

It belongs to the P-Pant transferase superfamily. AcpS family. Requires Mg(2+) as cofactor.

The protein localises to the cytoplasm. The catalysed reaction is apo-[ACP] + CoA = holo-[ACP] + adenosine 3',5'-bisphosphate + H(+). In terms of biological role, transfers the 4'-phosphopantetheine moiety from coenzyme A to a Ser of acyl-carrier-protein. This is Holo-[acyl-carrier-protein] synthase from Finegoldia magna (strain ATCC 29328 / DSM 20472 / WAL 2508) (Peptostreptococcus magnus).